The sequence spans 102 residues: Anti-lipopolysaccharide factor (102 aa).

A disulfide bridge links Cys32 with Cys53.

In terms of biological role, binds tightly to LPS and thus specifically inhibits the LPS-mediated activation of the hemolymph coagulation. It has a strong antibacterial effect especially on the growth of Gram-negative bacteria. This is Anti-lipopolysaccharide factor from Tachypleus tridentatus (Japanese horseshoe crab).